The chain runs to 348 residues: MAEQQKGLTYADAGVDIDAGNALVERIKPAARRTARPGTVSGLGGFGALFDLKAAGYRDPVLVAATDGVGTKLRIAIDTGEVDTIGIDLVAMCVNDLVCQGAEPLFFLDYFATGKLELDQAARIIEGIAEGCAASGCALIGGETAEMPGMYHKGDFDLAGFAVGAMERGADLPRGVAAGDVLLGLASNGVHSNGYSFVRKVVELSGLAWDAPSPFGGDSLGRALLAPTRLYVTQALAAVRAGGVHALAHITGGGLTENLPRVLPEGLGARIDLGAWDLPPVFRWLAETAAMAEPELLKTFNCGIGMIVVVAADRADAIAALLEAEGETVTRIGEVIPGQGVSYDGRLL.

It belongs to the AIR synthase family.

It is found in the cytoplasm. It carries out the reaction 2-formamido-N(1)-(5-O-phospho-beta-D-ribosyl)acetamidine + ATP = 5-amino-1-(5-phospho-beta-D-ribosyl)imidazole + ADP + phosphate + H(+). Its pathway is purine metabolism; IMP biosynthesis via de novo pathway; 5-amino-1-(5-phospho-D-ribosyl)imidazole from N(2)-formyl-N(1)-(5-phospho-D-ribosyl)glycinamide: step 2/2. The chain is Phosphoribosylformylglycinamidine cyclo-ligase from Cereibacter sphaeroides (strain ATCC 17025 / ATH 2.4.3) (Rhodobacter sphaeroides).